Reading from the N-terminus, the 392-residue chain is NDP-glycosyltransferase YjiC (392 aa).

UDP contacts are provided by residues Asn-18, Thr-229, Ser-255, Val-278, His-293, and 297 to 301 (NSTME).

This sequence belongs to the UDP-glycosyltransferase family. In terms of assembly, monomer.

It catalyses the reaction an NDP-glycose + an acceptor = a glycosylated acceptor + NDP.. Its activity is regulated as follows. Activity is improved in the presence of Mn(2+), Mg(2+) and Ca(2+), and inhibited by Ni(2+), Zn(2+) and Cu(2+). Glycosyltransferase that can glycosylate a wide range of substrates, including various flavonoids, phenyl ketones, curcuminoid, lignins, zingerone, triterpenes, stilbene and anthraquinone, using UDP-glucose or ADP-glucose as sugar donor. It also exhibits O-, N- and S-glycosylation activities towards simple aromatics. In vivo, the broad acceptor tolerance of YjiC might function as a detoxification agent against exogenous xenobiotics to make the strain adaptable to the changeable environment. This chain is NDP-glycosyltransferase YjiC (yjiC), found in Bacillus subtilis (strain 168).